Here is a 729-residue protein sequence, read N- to C-terminus: Golgin subfamily A member 5 (729 aa).

N-acetylserine is present on serine 2. The Cytoplasmic portion of the chain corresponds to 2–696 (SWFADLAGRA…IFLRRYPIAR (695 aa)). Dimethylated arginine occurs at positions 27 and 89. Disordered regions lie at residues 89–222 (RTVG…SQEL) and 626–645 (SASS…VDSG). The residue at position 116 (serine 116) is a Phosphoserine. A compositionally biased stretch (basic and acidic residues) spans 134–146 (PTGRVEVKKEKGR). A compositionally biased stretch (low complexity) spans 148–167 (PVSPSSPSGVSSVNTSVTTT). 2 stretches are compositionally biased toward polar residues: residues 175–186 (GSQSPGVNSSDS) and 626–638 (SASS…SAIN). The stretch at 215–629 (GSSRSQELSN…LEQQVHSASS (415 aa)) forms a coiled coil. A helical; Anchor for type IV membrane protein transmembrane segment spans residues 697–717 (VFVIIYMALLHLWVMIVLLTY). The Lumenal portion of the chain corresponds to 718 to 729 (SPEMHHDQPYGK).

In terms of assembly, homodimer. Interacts with RAB1A that has been activated by GTP-binding. Interacts with isoform CASP of CUX1. In terms of processing, highly phosphorylated during mitosis. Phosphorylation is barely detectable during interphase.

It localises to the golgi apparatus membrane. Functionally, involved in maintaining Golgi structure. Stimulates the formation of Golgi stacks and ribbons. Involved in intra-Golgi retrograde transport. The chain is Golgin subfamily A member 5 (Golga5) from Mus musculus (Mouse).